Here is a 727-residue protein sequence, read N- to C-terminus: Polyribonucleotide nucleotidyltransferase (727 aa).

Mg(2+) contacts are provided by Asp491 and Asp497. The 60-residue stretch at Pro558–Ile617 folds into the KH domain. The region spanning Gly627–Lys701 is the S1 motif domain. Positions Leu698–Ser727 are disordered. Polar residues predominate over residues Gly717–Ser727.

This sequence belongs to the polyribonucleotide nucleotidyltransferase family. It depends on Mg(2+) as a cofactor.

The protein localises to the cytoplasm. It catalyses the reaction RNA(n+1) + phosphate = RNA(n) + a ribonucleoside 5'-diphosphate. In terms of biological role, involved in mRNA degradation. Catalyzes the phosphorolysis of single-stranded polyribonucleotides processively in the 3'- to 5'-direction. The polypeptide is Polyribonucleotide nucleotidyltransferase (Desulfitobacterium hafniense (strain Y51)).